The sequence spans 330 residues: o-succinylbenzoate synthase (330 aa).

Lys-130 acts as the Proton donor in catalysis. Mg(2+) is bound by residues Asp-155, Glu-184, and Asp-206. Lys-228 functions as the Proton acceptor in the catalytic mechanism.

Belongs to the mandelate racemase/muconate lactonizing enzyme family. MenC type 1 subfamily. Monomer. It depends on a divalent metal cation as a cofactor.

The enzyme catalyses (1R,6R)-6-hydroxy-2-succinyl-cyclohexa-2,4-diene-1-carboxylate = 2-succinylbenzoate + H2O. The protein operates within quinol/quinone metabolism; 1,4-dihydroxy-2-naphthoate biosynthesis; 1,4-dihydroxy-2-naphthoate from chorismate: step 4/7. Its pathway is cofactor biosynthesis; phylloquinone biosynthesis. Functionally, converts 2-succinyl-6-hydroxy-2,4-cyclohexadiene-1-carboxylate (SHCHC) to 2-succinylbenzoate (OSB). Does not show N-succinylamino acid racemase (NSAR) activity with N-succinyl-L-phenylglycine as substrate. The protein is o-succinylbenzoate synthase of Bdellovibrio bacteriovorus (strain ATCC 15356 / DSM 50701 / NCIMB 9529 / HD100).